A 345-amino-acid chain; its full sequence is Beta-2-glycoprotein 1 (345 aa).

The first 19 residues, Met1–Ala19, serve as a signal peptide directing secretion. Sushi domains follow at residues Arg21–Pro81, Arg82–Pro139, Ile140–Glu202, and Val203–Ala262. Disulfide bonds link Cys23/Cys66, Cys51/Cys79, Cys84/Cys124, Cys110/Cys137, Cys142/Cys188, Cys174/Cys200, Cys205/Cys248, Cys234/Cys260, Cys264/Cys315, Cys300/Cys325, and Cys307/Cys345. O-linked (GalNAc...) threonine glycosylation occurs at Thr33. A glycan (N-linked (GlcNAc...) asparagine) is linked at Asn92. N-linked (GlcNAc...) asparagine glycans are attached at residues Asn162, Asn183, and Asn193. An N-linked (GlcNAc...) asparagine glycan is attached at Asn253. The interval Ser263–Cys345 is sushi-like.

Expressed by the liver and secreted in plasma.

It is found in the secreted. Functionally, binds to various kinds of negatively charged substances such as heparin, phospholipids, and dextran sulfate. May prevent activation of the intrinsic blood coagulation cascade by binding to phospholipids on the surface of damaged cells. The polypeptide is Beta-2-glycoprotein 1 (APOH) (Bos taurus (Bovine)).